Consider the following 115-residue polypeptide: DNA-binding protein PH1060 (115 aa).

The protein belongs to the PDCD5 family.

This is DNA-binding protein PH1060 from Pyrococcus horikoshii (strain ATCC 700860 / DSM 12428 / JCM 9974 / NBRC 100139 / OT-3).